A 95-amino-acid polypeptide reads, in one-letter code: Acylphosphatase (95 aa).

The Acylphosphatase-like domain occupies 5–93; sequence RAHLYIKGKV…GEFQDFRILP (89 aa). Catalysis depends on residues Arg20 and Asn38.

The protein belongs to the acylphosphatase family.

The catalysed reaction is an acyl phosphate + H2O = a carboxylate + phosphate + H(+). In Pyrobaculum islandicum (strain DSM 4184 / JCM 9189 / GEO3), this protein is Acylphosphatase (acyP).